Consider the following 500-residue polypeptide: Glycerol kinase (500 aa).

Position 11 (Thr-11) interacts with ADP. ATP is bound by residues Thr-11, Thr-12, and Ser-13. Thr-11 serves as a coordination point for sn-glycerol 3-phosphate. Arg-15 contributes to the ADP binding site. Positions 81, 82, 133, and 242 each coordinate sn-glycerol 3-phosphate. Residues Arg-81, Glu-82, Tyr-133, Asp-242, and Gln-243 each coordinate glycerol. ADP-binding residues include Thr-264 and Gly-307. Residues Thr-264, Gly-307, Gln-311, and Gly-411 each contribute to the ATP site. Gly-411 serves as a coordination point for ADP.

This sequence belongs to the FGGY kinase family.

The catalysed reaction is glycerol + ATP = sn-glycerol 3-phosphate + ADP + H(+). The protein operates within polyol metabolism; glycerol degradation via glycerol kinase pathway; sn-glycerol 3-phosphate from glycerol: step 1/1. With respect to regulation, inhibited by fructose 1,6-bisphosphate (FBP). Functionally, key enzyme in the regulation of glycerol uptake and metabolism. Catalyzes the phosphorylation of glycerol to yield sn-glycerol 3-phosphate. The polypeptide is Glycerol kinase (Bradyrhizobium sp. (strain ORS 278)).